The following is a 583-amino-acid chain: Proline--tRNA ligase (583 aa).

Belongs to the class-II aminoacyl-tRNA synthetase family. ProS type 1 subfamily. Homodimer.

The protein localises to the cytoplasm. It catalyses the reaction tRNA(Pro) + L-proline + ATP = L-prolyl-tRNA(Pro) + AMP + diphosphate. Functionally, catalyzes the attachment of proline to tRNA(Pro) in a two-step reaction: proline is first activated by ATP to form Pro-AMP and then transferred to the acceptor end of tRNA(Pro). As ProRS can inadvertently accommodate and process non-cognate amino acids such as alanine and cysteine, to avoid such errors it has two additional distinct editing activities against alanine. One activity is designated as 'pretransfer' editing and involves the tRNA(Pro)-independent hydrolysis of activated Ala-AMP. The other activity is designated 'posttransfer' editing and involves deacylation of mischarged Ala-tRNA(Pro). The misacylated Cys-tRNA(Pro) is not edited by ProRS. This is Proline--tRNA ligase from Aromatoleum aromaticum (strain DSM 19018 / LMG 30748 / EbN1) (Azoarcus sp. (strain EbN1)).